A 759-amino-acid chain; its full sequence is Hormone-sensitive lipase (759 aa).

The Involved in the stabilization of the negatively charged intermediate by the formation of the oxyanion hole signature appears at 349–351 (HGG). Residue Ser423 is part of the active site. The interval 534–553 (GRKPQKTTSPTAESVRPTES) is disordered. Ser557 carries the post-translational modification Phosphoserine. Position 559 is a phosphoserine; by AMPK (Ser559). At Thr574 the chain carries Phosphothreonine. The interval 583–604 (LSNSEPSDSPEMSQSMETLGPS) is disordered. The span at 585 to 604 (NSEPSDSPEMSQSMETLGPS) shows a compositional bias: polar residues. Phosphoserine occurs at positions 597, 618, 650, and 651. Catalysis depends on residues Asp694 and His724.

The protein belongs to the 'GDXG' lipolytic enzyme family. Monomer and homodimer. Interacts with CAVIN1 in the adipocyte cytoplasm. Interacts with PLIN5. Phosphorylation by AMPK reduces its translocation towards the lipid droplets.

The protein resides in the cell membrane. It is found in the membrane. Its subcellular location is the caveola. It localises to the cytoplasm. The protein localises to the cytosol. The protein resides in the lipid droplet. It catalyses the reaction a diacylglycerol + H2O = a monoacylglycerol + a fatty acid + H(+). It carries out the reaction a triacylglycerol + H2O = a diacylglycerol + a fatty acid + H(+). The enzyme catalyses a monoacylglycerol + H2O = glycerol + a fatty acid + H(+). The catalysed reaction is Hydrolyzes glycerol monoesters of long-chain fatty acids.. It catalyses the reaction cholesteryl (9Z-octadecenoate) + H2O = cholesterol + (9Z)-octadecenoate + H(+). It carries out the reaction all-trans-retinyl hexadecanoate + H2O = all-trans-retinol + hexadecanoate + H(+). The enzyme catalyses 1,2-di-(9Z-octadecenoyl)-glycerol + H2O = (9Z-octadecenoyl)-glycerol + (9Z)-octadecenoate + H(+). The catalysed reaction is 2-(5Z,8Z,11Z,14Z-eicosatetraenoyl)-glycerol + H2O = glycerol + (5Z,8Z,11Z,14Z)-eicosatetraenoate + H(+). It catalyses the reaction 1-(9Z-octadecenoyl)-glycerol + H2O = glycerol + (9Z)-octadecenoate + H(+). It carries out the reaction 2-(9Z-octadecenoyl)-glycerol + H2O = glycerol + (9Z)-octadecenoate + H(+). The enzyme catalyses 1-O-hexadecyl-2-acetyl-sn-glycerol + H2O = 1-O-hexadecyl-sn-glycerol + acetate + H(+). The catalysed reaction is 1,2-di-(9Z-octadecenoyl)-sn-glycerol + H2O = (9Z-octadecenoyl)-glycerol + (9Z)-octadecenoate + H(+). It catalyses the reaction 1,3-di-(9Z-octadecenoyl)-glycerol + H2O = 1-(9Z-octadecenoyl)-glycerol + (9Z)-octadecenoate + H(+). It carries out the reaction 1,2-di-(9Z-octadecenoyl)-glycerol + (9Z)-octadecenoate + H(+) = 1,2,3-tri-(9Z-octadecenoyl)-glycerol + H2O. The enzyme catalyses 2,3-di-(9Z)-octadecenoyl-sn-glycerol + H2O = 2-(9Z-octadecenoyl)-glycerol + (9Z)-octadecenoate + H(+). The catalysed reaction is 1,2,3-tri-(9Z-octadecenoyl)-glycerol + H2O = di-(9Z)-octadecenoylglycerol + (9Z)-octadecenoate + H(+). It catalyses the reaction 1,2-di-(9Z-octadecenoyl)-glycerol + H2O = 2-(9Z-octadecenoyl)-glycerol + (9Z)-octadecenoate + H(+). It participates in glycerolipid metabolism; triacylglycerol degradation. In terms of biological role, lipase with broad substrate specificity, catalyzing the hydrolysis of triacylglycerols (TAGs), diacylglycerols (DAGs), monoacylglycerols (MAGs), cholesteryl esters and retinyl esters. Shows a preferential hydrolysis of DAGs over TAGs and MAGs and of the fatty acid (FA) esters at the sn-1 and sn-2 positions of the glycerol backbone in TAGs. Preferentially hydrolyzes FA esters at the sn-3 position of the glycerol backbone in DAGs. Catalyzes the hydrolysis of 2-arachidonoylglycerol, an endocannabinoid and of 2-acetyl monoalkylglycerol ether, the penultimate precursor of the pathway for de novo synthesis of platelet-activating factor. In adipose tissue and heart, it primarily hydrolyzes stored triglycerides to free fatty acids, while in steroidogenic tissues, it principally converts cholesteryl esters to free cholesterol for steroid hormone production. The protein is Hormone-sensitive lipase (Lipe) of Mus musculus (Mouse).